We begin with the raw amino-acid sequence, 80 residues long: Exodeoxyribonuclease 7 small subunit (80 aa).

The protein belongs to the XseB family. In terms of assembly, heterooligomer composed of large and small subunits.

It is found in the cytoplasm. The enzyme catalyses Exonucleolytic cleavage in either 5'- to 3'- or 3'- to 5'-direction to yield nucleoside 5'-phosphates.. Its function is as follows. Bidirectionally degrades single-stranded DNA into large acid-insoluble oligonucleotides, which are then degraded further into small acid-soluble oligonucleotides. This Rickettsia akari (strain Hartford) protein is Exodeoxyribonuclease 7 small subunit.